The sequence spans 634 residues: Probable potassium transport system protein Kup (634 aa).

Transmembrane regions (helical) follow at residues 21–41, 61–81, 110–130, 148–168, 180–200, 217–237, 258–278, 296–316, 348–368, 377–397, 408–428, and 432–452; these read IILS…LYTL, ILSL…VAVI, IYIV…DGVI, PHMK…LFLC, FGPI…YNIA, FFLE…LAVT, WMYV…ALVL, GLYP…QALI, IYVP…VIGF, AYGV…IIYA, LWMM…ANII, and DGAW…RTWL.

Belongs to the HAK/KUP transporter (TC 2.A.72) family.

It localises to the cell inner membrane. It catalyses the reaction K(+)(in) + H(+)(in) = K(+)(out) + H(+)(out). Transport of potassium into the cell. Likely operates as a K(+):H(+) symporter. The sequence is that of Probable potassium transport system protein Kup from Xylella fastidiosa (strain 9a5c).